The chain runs to 168 residues: Small ribosomal subunit protein uS5 (168 aa).

Positions 12-75 (YQEKLVSVTR…DQAKKNMVYI (64 aa)) constitute an S5 DRBM domain.

This sequence belongs to the universal ribosomal protein uS5 family. As to quaternary structure, part of the 30S ribosomal subunit. Contacts proteins S4 and S8.

With S4 and S12 plays an important role in translational accuracy. Its function is as follows. Located at the back of the 30S subunit body where it stabilizes the conformation of the head with respect to the body. This Legionella pneumophila (strain Paris) protein is Small ribosomal subunit protein uS5.